The chain runs to 113 residues: uncharacterized protein (113 aa).

The protein belongs to the HesB/IscA family.

This is an uncharacterized protein from Synechocystis sp. (strain ATCC 27184 / PCC 6803 / Kazusa).